The chain runs to 429 residues: MREELIQGLLDFLNASPTPFHATTSLAMRLEAAGYRHLDERAPWHTEAGGRYYVTRNDSSIIAFKLGKRPVVEGGIRLVGAHTDSPCLRVKPSPELQRQGYFQLGVEVYGGALLAPWFDRDLSLAGRVTYRRDGKVESQLIDFYQPIAVIPNLAIHLNREANMGWAINAQNELPPILAQLASSETADFRALLAEQLAMEHDFNPDAVLDYELSFYDTQSAAIVGLNQDFIASARLDNLLSCYAGLQALIDSSDEETCVLVCTDHEEVGSCSACGADGPFLEQVLRRVLPEGDDFVRSIQRSLLVSADNAHGVHPNYADKHDGNHGPKLNAGPVIKINSNQRYATNSETAGFFRHLCLENEVPVQSFVVRSDMACGSTIGPITASQLGVRTVDIGLPTFAMHSIRELAGSHDVDHLVKVLTAFYSSPELP.

3 residues coordinate Zn(2+): His82, His156, and His401.

The protein belongs to the peptidase M18 family. Requires Zn(2+) as cofactor.

The polypeptide is Probable M18 family aminopeptidase 2 (Ectopseudomonas mendocina (strain ymp) (Pseudomonas mendocina)).